A 149-amino-acid polypeptide reads, in one-letter code: Proline-rich acidic protein 1 (149 aa).

The N-terminal stretch at 1–20 (MKRFLLATCLVAALLWEAGA) is a signal peptide. Disordered stretches follow at residues 51–79 (EPLE…KRPD) and 97–122 (LQGP…EVPQ). The segment covering 66 to 79 (PKQKPAAAEEKRPD) has biased composition (basic and acidic residues).

As to quaternary structure, interacts with MTTP. Interacts with MAD1L1. Predominantly expressed in the intestinal epithelial cells than in the liver (at protein level). Abundantly expressed in the uterus during late pregnancy by uterus epithelial cells. After birth expression rapidly decreases and is no longer found in the uterus by the third day. Also highly expressed in the small intestine where it shows a proximal-distal graded expression.

The protein resides in the secreted. It is found in the endoplasmic reticulum. Lipid-binding protein which promotes lipid absorption by facilitating MTTP-mediated lipid transfer (mainly triglycerides and phospholipids) and MTTP-mediated apoB lipoprotein assembly and secretion. Protects the gastrointestinal epithelium from irradiation-induced apoptosis. May play an important role in maintaining normal growth homeostasis in epithelial cells. Involved in p53/TP53-dependent cell survival after DNA damage. The sequence is that of Proline-rich acidic protein 1 (Prap1) from Mus musculus (Mouse).